Consider the following 351-residue polypeptide: Ribosomal RNA large subunit methyltransferase M (351 aa).

S-adenosyl-L-methionine contacts are provided by residues Ser186, 219-222, Asp238, Asp258, and Asp274; that span reads APGG. The Proton acceptor role is filled by Lys303.

The protein belongs to the class I-like SAM-binding methyltransferase superfamily. RNA methyltransferase RlmE family. RlmM subfamily. As to quaternary structure, monomer.

It localises to the cytoplasm. It carries out the reaction cytidine(2498) in 23S rRNA + S-adenosyl-L-methionine = 2'-O-methylcytidine(2498) in 23S rRNA + S-adenosyl-L-homocysteine + H(+). Its function is as follows. Catalyzes the 2'-O-methylation at nucleotide C2498 in 23S rRNA. This Xylella fastidiosa (strain M23) protein is Ribosomal RNA large subunit methyltransferase M.